The sequence spans 286 residues: Ribose-5-phosphate isomerase (286 aa).

This sequence belongs to the ribose 5-phosphate isomerase family.

The protein resides in the cytoplasm. The enzyme catalyses aldehydo-D-ribose 5-phosphate = D-ribulose 5-phosphate. It participates in carbohydrate degradation; pentose phosphate pathway; D-ribose 5-phosphate from D-ribulose 5-phosphate (non-oxidative stage): step 1/1. The polypeptide is Ribose-5-phosphate isomerase (RKI1) (Mycosarcoma maydis (Corn smut fungus)).